The following is a 1120-amino-acid chain: Transcriptional repressor NF-X1 (1120 aa).

The segment at 9–26 (GTFKFNTDAAEFIPQEKK) is interaction with PABPC1 and PABC4. A disordered region spans residues 22 to 295 (PQEKKNSGLN…LNERPAKSTC (274 aa)). A phosphoserine mark is found at S50, S82, and S95. The span at 73–106 (YHPSGSKPKSQQTSFQSSPCNKSPKSHGLQNQPW) shows a compositional bias: polar residues. The segment covering 111 to 120 (NEKHHIRVKK) has biased composition (basic residues). Residues 124 to 141 (LAEQTSDTAGLESSTRSE) show a composition bias toward polar residues. S129 and S150 each carry phosphoserine. Basic and acidic residues-rich tracts occupy residues 142-159 (SGTD…KEVV), 188-202 (LKCE…KPED), 222-254 (SSRK…EGAR), and 282-291 (PKDDLNERPA). S326 is subject to Phosphoserine. The RING-type; atypical zinc finger occupies 358 to 409 (CMVCCELVRVTAPVWSCQSCYHVFHLNCIKKWARSPASQADGQSGWRCPACQ). 8 NF-X1-type zinc fingers span residues 453–471 (CPHS…PCPA), 506–525 (CGQH…PCQI), 567–586 (CGNH…QCPR), 632–655 (CGSL…PCSR), 694–713 (CGRH…KCPL), 721–740 (CGLH…TCWQ), 832–854 (CGMH…PCKQ), and 863–884 (CGHP…ACKA). Residues 994-1062 (LKFVSDVEKE…KRNVVVTAIR (69 aa)) enclose the R3H domain. Residues 1081 to 1109 (QARPPPPIPHHRHQSDKNPGSSNLQKITK) form a disordered region. Positions 1097 to 1106 (KNPGSSNLQK) are enriched in polar residues.

The protein belongs to the NFX1 family. Isoform 1 interacts with PABPC1 and PABPC4. As to quaternary structure, (Microbial infection) Isoform 1 and isoform 3 interact with human papillomavirus (HPV) type-16 E6 oncoprotein. Isoform 3 is polyubiquitinated in the presence of HPV16 E6 protein; which leads to proteasomal degradation. Isoform 1 is not polyubiquitinated.

The protein localises to the nucleus. In terms of biological role, binds to the X-box motif of MHC class II genes and represses their expression. May play an important role in regulating the duration of an inflammatory response by limiting the period in which MHC class II molecules are induced by interferon-gamma. Isoform 3 binds to the X-box motif of TERT promoter and represses its expression. Together with PABPC1 or PABPC4, isoform 1 acts as a coactivator for TERT expression. Mediates E2-dependent ubiquitination. This is Transcriptional repressor NF-X1 (NFX1) from Homo sapiens (Human).